Reading from the N-terminus, the 306-residue chain is Ribosomal RNA small subunit methyltransferase H (306 aa).

Residues 33–35, Asp51, Phe78, Asp96, and Gln103 each bind S-adenosyl-L-methionine; that span reads GGY.

This sequence belongs to the methyltransferase superfamily. RsmH family.

The protein resides in the cytoplasm. It carries out the reaction cytidine(1402) in 16S rRNA + S-adenosyl-L-methionine = N(4)-methylcytidine(1402) in 16S rRNA + S-adenosyl-L-homocysteine + H(+). Functionally, specifically methylates the N4 position of cytidine in position 1402 (C1402) of 16S rRNA. This is Ribosomal RNA small subunit methyltransferase H from Rickettsia felis (strain ATCC VR-1525 / URRWXCal2) (Rickettsia azadi).